The primary structure comprises 179 residues: Acireductone dioxygenase (179 aa).

Residues 7-26 (MDDAPGDPRQPHRPDPGRPV) are disordered. 4 residues coordinate Fe(2+): histidine 88, histidine 90, glutamate 94, and histidine 133. Positions 88, 90, 94, and 133 each coordinate Ni(2+).

The protein belongs to the acireductone dioxygenase (ARD) family. Monomer. Interacts with MMP14. It depends on Fe(2+) as a cofactor. The cofactor is Ni(2+). As to expression, detected in heart, colon, lung, stomach, brain, spleen, liver, skeletal muscle and kidney.

The protein resides in the cytoplasm. The protein localises to the nucleus. It is found in the cell membrane. The enzyme catalyses 1,2-dihydroxy-5-(methylsulfanyl)pent-1-en-3-one + O2 = 4-methylsulfanyl-2-oxobutanoate + formate + 2 H(+). The catalysed reaction is 1,2-dihydroxy-5-(methylsulfanyl)pent-1-en-3-one + O2 = 3-(methylsulfanyl)propanoate + CO + formate + 2 H(+). Its pathway is amino-acid biosynthesis; L-methionine biosynthesis via salvage pathway; L-methionine from S-methyl-5-thio-alpha-D-ribose 1-phosphate: step 5/6. Catalyzes 2 different reactions between oxygen and the acireductone 1,2-dihydroxy-3-keto-5-methylthiopentene (DHK-MTPene) depending upon the metal bound in the active site. Fe-containing acireductone dioxygenase (Fe-ARD) produces formate and 2-keto-4-methylthiobutyrate (KMTB), the alpha-ketoacid precursor of methionine in the methionine recycle pathway. Ni-containing acireductone dioxygenase (Ni-ARD) produces methylthiopropionate, carbon monoxide and formate, and does not lie on the methionine recycle pathway. Also down-regulates cell migration mediated by MMP14. Necessary for hepatitis C virus replication in an otherwise non-permissive cell line. In Homo sapiens (Human), this protein is Acireductone dioxygenase.